A 285-amino-acid polypeptide reads, in one-letter code: Urease accessory protein UreD (285 aa).

Belongs to the UreD family. In terms of assembly, ureD, UreF and UreG form a complex that acts as a GTP-hydrolysis-dependent molecular chaperone, activating the urease apoprotein by helping to assemble the nickel containing metallocenter of UreC. The UreE protein probably delivers the nickel.

The protein localises to the cytoplasm. Its function is as follows. Required for maturation of urease via the functional incorporation of the urease nickel metallocenter. The polypeptide is Urease accessory protein UreD (Azoarcus sp. (strain BH72)).